Reading from the N-terminus, the 239-residue chain is Ribosomal RNA small subunit methyltransferase G (239 aa).

S-adenosyl-L-methionine contacts are provided by residues Gly-77, Phe-82, 128–129 (AE), and Arg-147.

The protein belongs to the methyltransferase superfamily. RNA methyltransferase RsmG family.

It is found in the cytoplasm. Specifically methylates the N7 position of guanine in position 535 of 16S rRNA. This Bacillus cereus (strain AH187) protein is Ribosomal RNA small subunit methyltransferase G.